The primary structure comprises 764 residues: Reticulon-1 (764 aa).

Disordered regions lie at residues 1 to 37 (MAAN…GGAL), 115 to 147 (PDIK…SGIE), 247 to 400 (LYNS…SEIE), and 455 to 475 (ESCD…DSPM). Positions 261-282 (VTISFTGMETTLQTEYPENQQG) are enriched in polar residues. The segment covering 328–337 (EEQRKYKISE) has biased composition (basic and acidic residues). The Reticulon domain maps to 578–764 (AIELLYWRDI…AKIPGTKQKE (187 aa)). The next 2 helical transmembrane spans lie at 607–627 (FSVV…TISF) and 696–716 (VLMW…LLIM).

It is found in the endoplasmic reticulum membrane. The protein localises to the nucleus. Functionally, inhibits amyloid precursor protein processing, probably by blocking BACE1 activity. The polypeptide is Reticulon-1 (Xenopus tropicalis (Western clawed frog)).